A 323-amino-acid chain; its full sequence is tRNA dimethylallyltransferase (323 aa).

Residue 32-39 (GPTASGKS) participates in ATP binding. 34 to 39 (TASGKS) contributes to the substrate binding site. The interaction with substrate tRNA stretch occupies residues 57–60 (DSMQ).

Belongs to the IPP transferase family. In terms of assembly, monomer. It depends on Mg(2+) as a cofactor.

The enzyme catalyses adenosine(37) in tRNA + dimethylallyl diphosphate = N(6)-dimethylallyladenosine(37) in tRNA + diphosphate. Catalyzes the transfer of a dimethylallyl group onto the adenine at position 37 in tRNAs that read codons beginning with uridine, leading to the formation of N6-(dimethylallyl)adenosine (i(6)A). This chain is tRNA dimethylallyltransferase, found in Rhodopseudomonas palustris (strain BisB5).